The chain runs to 470 residues: Glutamate--tRNA ligase (470 aa).

A 'HIGH' region motif is present at residues 9 to 19 (PSPTGFLHVGG). The 'KMSKS' region signature appears at 236–240 (RLSKR). Lys239 lines the ATP pocket.

Belongs to the class-I aminoacyl-tRNA synthetase family. Glutamate--tRNA ligase type 1 subfamily. In terms of assembly, monomer.

It localises to the cytoplasm. It catalyses the reaction tRNA(Glu) + L-glutamate + ATP = L-glutamyl-tRNA(Glu) + AMP + diphosphate. Functionally, catalyzes the attachment of glutamate to tRNA(Glu) in a two-step reaction: glutamate is first activated by ATP to form Glu-AMP and then transferred to the acceptor end of tRNA(Glu). This Legionella pneumophila subsp. pneumophila (strain Philadelphia 1 / ATCC 33152 / DSM 7513) protein is Glutamate--tRNA ligase.